The sequence spans 159 residues: Phosphopantetheine adenylyltransferase (159 aa).

Thr10 serves as a coordination point for substrate. ATP is bound by residues 10–11 (TF) and His18. Residues Lys42, Leu73, and Arg87 each coordinate substrate. ATP-binding positions include 88–90 (GLR), Glu98, and 123–129 (YSYVSGT).

This sequence belongs to the bacterial CoaD family. As to quaternary structure, homohexamer. The cofactor is Mg(2+).

It is found in the cytoplasm. The enzyme catalyses (R)-4'-phosphopantetheine + ATP + H(+) = 3'-dephospho-CoA + diphosphate. It participates in cofactor biosynthesis; coenzyme A biosynthesis; CoA from (R)-pantothenate: step 4/5. Its function is as follows. Reversibly transfers an adenylyl group from ATP to 4'-phosphopantetheine, yielding dephospho-CoA (dPCoA) and pyrophosphate. The chain is Phosphopantetheine adenylyltransferase from Coxiella burnetii (strain CbuK_Q154) (Coxiella burnetii (strain Q154)).